Consider the following 348-residue polypeptide: Calcium homeostasis modulator protein 1 (348 aa).

The Cytoplasmic segment spans residues 1–20; it reads MDKFRMIFQFLQSNQESFMN. The tract at residues 9–36 is central pore; that stretch reads QFLQSNQESFMNGICGIMALASAQMYSA. The chain crosses the membrane as a helical span at residues 21–36; it reads GICGIMALASAQMYSA. The Extracellular segment spans residues 37-48; it reads FDFNCPCLPGYN. 2 cysteine pairs are disulfide-bonded: Cys-41–Cys-126 and Cys-43–Cys-160. The helical transmembrane segment at 49–71 threads the bilayer; that stretch reads VVYSLGILLTPPLVLFLLGLVMN. Residues 62 to 69 are phospholipid-binding; it reads VLFLLGLV. Residues 72–98 are Cytoplasmic-facing; it reads NNISMLAEEWKRPAGRRAKDPAVLRYM. Residues 99-124 traverse the membrane as a helical segment; it reads FCSMAQRALIAPVVWVAVTLLDGKCF. The S-palmitoyl cysteine moiety is linked to residue Cys-100. Residues 104-116 form a phospholipid-binding region; it reads QRALIAPVVWVAV. Topologically, residues 125 to 179 are extracellular; the sequence is LCAFCTAVPVATLGNGSLVPGLPAPELARLLARVPCPEIYDGNWLLAREVAVRYL. Asn-139 carries N-linked (GlcNAc...) asparagine glycosylation. Residues 180–205 traverse the membrane as a helical segment; the sequence is RCISQALGWSFVLLTTLLAFVVRSVR. Residues 191-201 form a phospholipid-binding region; that stretch reads VLLTTLLAFVV. The Cytoplasmic segment spans residues 206-348; it reads PCFTQVAFLK…KEVATYFSKV (143 aa). A lipid anchor (S-palmitoyl cysteine) is attached at Cys-207. The segment at 324 to 348 is disordered; sequence LMSNGWAGGEPRPPRKEVATYFSKV.

Belongs to the CALHM family. As to quaternary structure, oligomerizes to form hexamers and octamers. Does not form gap junctions. Associates with CALHM3 as a pore-forming subunit in a hetero-hexameric channel complex. Post-translationally, N-glycosylated. Assembly with CALHM3 is associated with N-glycan remodeling and formation of hybrid complex- and high mannose-type glycochains. This N-glycan processing regulates channel trafficking and gating kinetics. In terms of processing, palmitoylated by ZDHHC3, ZDHHC20 and possibly ZDHHC7. Palmitoylation regulates voltage-dependent gating of the channel by shifting it toward more depolarized potentials. As to expression, specifically expressed in type II taste bud cells (at protein level). Not expressed in brain.

It is found in the cell membrane. Its subcellular location is the endoplasmic reticulum membrane. The protein localises to the basolateral cell membrane. It catalyses the reaction ATP(in) = ATP(out). It carries out the reaction Ca(2+)(in) = Ca(2+)(out). The catalysed reaction is Mg(2+)(in) = Mg(2+)(out). The enzyme catalyses Na(+)(in) = Na(+)(out). It catalyses the reaction K(+)(in) = K(+)(out). It carries out the reaction Li(+)(in) = Li(+)(out). The catalysed reaction is Rb(+)(in) = Rb(+)(out). The enzyme catalyses Cs(+)(in) = Cs(+)(out). It catalyses the reaction chloride(in) = chloride(out). Its activity is regulated as follows. Regulated by membrane voltage and extracellular Ca(2+). Inhibited by Gd(3+), ruthenium red, and Zn(2+) and partially inhibited by 2-aminoethoxydiphenyl borate. Functionally, pore-forming subunit of gustatory voltage-gated ion channels required for sensory perception of sweet, bitter and umami tastes. With CALHM3 forms a fast-activating voltage-gated ATP-release channel in type II taste bud cells, ATP acting as a neurotransmitter to activate afferent neural gustatory pathways. Acts both as a voltage-gated and calcium-activated ion channel: mediates neuronal excitability in response to membrane depolarization and low extracellular Ca(2+) concentration. Has poor ion selectivity and forms a wide pore (around 14 Angstroms) that mediates permeation of small ions including Ca(2+), Na(+), K(+) and Cl(-), as well as larger ions such as ATP(4-). Mediates Ca(2+) influx and downstream activation of the ERK1 and ERK2 cascade in neurons. Triggers endoplasmic reticulum stress by reducing the calcium content of the endoplasmic reticulum. May indirectly control amyloid precursor protein (APP) proteolysis and aggregated amyloid-beta (Abeta) peptides levels in a Ca(2+) dependent manner. The polypeptide is Calcium homeostasis modulator protein 1 (Mus musculus (Mouse)).